The chain runs to 152 residues: Protein FERTILITY RESTORER RF2, mitochondrial (152 aa).

Residues 1-52 (MSTLVTCSLPGAVTTHASTRRFGGSQFQTSQASCISFKREVSAKAVLRSVRC) constitute a mitochondrion transit peptide. A compositionally biased stretch (polar residues) spans 52–69 (CNATQTQSAQRKSSTATV). Positions 52 to 99 (CNATQTQSAQRKSSTATVKRSDPKGKIQGPKLDDGSGGFPPFRFGKGG) are disordered.

Its subcellular location is the mitochondrion. Functionally, restores fertility in rice varieties with LD-type cytoplasmic male sterility (CMS). CMS is caused by genetic incompatibility between nuclei and mitochondria within male reproductive organs. Corresponds to the functional allele of RF2, which is dependent of the presence of Ile-78 in the japonica cultivars Fukuyama and Owarihatamochi (AC F1SZ42), and indica cultivar Kasalath (AC F1SZ41). Non-functional RF2 alleles are found in japonica cultivars Taichung 65 and Nipponbare (AC F1SZ44), where Ile-78 is replaced by Thr-78. This is Protein FERTILITY RESTORER RF2, mitochondrial from Oryza sativa subsp. japonica (Rice).